The chain runs to 162 residues: uncharacterized protein (162 aa).

Pentapeptide repeat domains are found at residues 33–72 (ASLIGAQLIFVDLGGANLTRAQLDSATLKNANLALANMTE), 73–112 (VCLIYADLSNADLSGANLVGADLTNADLSGAKLGGADLRK), and 113–152 (ANLSEASLRGADLRGVNLIEANLTNTDFSEADLTGAYISD).

This is an uncharacterized protein from Synechocystis sp. (strain ATCC 27184 / PCC 6803 / Kazusa).